The primary structure comprises 131 residues: Small ribosomal subunit protein uS8 (131 aa).

This sequence belongs to the universal ribosomal protein uS8 family. As to quaternary structure, part of the 30S ribosomal subunit. Contacts proteins S5 and S12.

One of the primary rRNA binding proteins, it binds directly to 16S rRNA central domain where it helps coordinate assembly of the platform of the 30S subunit. The protein is Small ribosomal subunit protein uS8 of Dictyoglomus turgidum (strain DSM 6724 / Z-1310).